Reading from the N-terminus, the 266-residue chain is Type II iodothyronine deiodinase (266 aa).

The Lumenal portion of the chain corresponds to 1-9 (MGLLSVDLL). The chain crosses the membrane as a helical; Signal-anchor for type III membrane protein span at residues 10–34 (ITLQILPVFFSNCLFLALYDSVILL). The Cytoplasmic portion of the chain corresponds to 35–266 (KHVALLLSRS…KNFSKRUILD (232 aa)). Selenocysteine 130 is an active-site residue. Residues selenocysteine 130 and selenocysteine 263 are each a non-standard amino acid (selenocysteine).

The protein belongs to the iodothyronine deiodinase family. Predominantly monomer. Can form homodimers but homodimerization is not essential for enzyme activity. Interacts with USP20 and USP33. Interacts with MARCHF6. Ubiquitinated by MARCHF6, leading to its degradation by the proteasome. Deubiquitinated by USP20 and USP33. Expressed in cerebral cortex, cerebellum, pituitary gland, mostly in anterior pituitary gland, and pineal gland, as well as in brown adipose tissue (BAT).

It is found in the endoplasmic reticulum membrane. It carries out the reaction 3,3',5-triiodo-L-thyronine + iodide + A + H(+) = L-thyroxine + AH2. It catalyses the reaction 3,3'-diiodo-L-thyronine + iodide + A + H(+) = 3,3',5'-triiodo-L-thyronine + AH2. The enzyme catalyses 3'-iodo-L-thyronine + iodide + A + H(+) = 3',5'-diiodo-L-thyronine + AH2. The catalysed reaction is 3,3'-diiodothyronamine + iodide + A + H(+) = 3,3',5'-triiodothyronamine + AH2. It carries out the reaction 3'-iodothyronamine + iodide + A + H(+) = 3',5'-diiodothyronamine + AH2. Functionally, plays a crucial role in the metabolism of thyroid hormones (TH) and has specific roles in TH activation and inactivation by deiodination. Catalyzes the deiodination of L-thyroxine (T4) to 3,5,3'-triiodothyronine (T3) and 3',5'-diiodothyronine (3',5'-T2) to 3'-monoiodothyronine (3'-T1) via outer-ring deiodination (ORD). Catalyzes the deiodination of 3,3',5'-triiodothyronine (rT3) to 3,3'-diiodothyronine (3,3'-T2) via ORD. Catalyzes the phenolic ring deiodinations of 3,3',5'-triiodothyronamine and 3',5'- diiodothyronamine. In Rattus norvegicus (Rat), this protein is Type II iodothyronine deiodinase (Dio2).